Here is a 616-residue protein sequence, read N- to C-terminus: Sulfite reductase [NADPH] hemoprotein beta-component (616 aa).

The segment covering 1-10 (MDDHSPRDAA) has biased composition (basic and acidic residues). The tract at residues 1–35 (MDDHSPRDAAETPAPGPAATPAKRVYETPPTSRPI) is disordered. Residues 11–22 (ETPAPGPAATPA) are compositionally biased toward low complexity. Residues cysteine 470, cysteine 476, cysteine 515, and cysteine 519 each contribute to the [4Fe-4S] cluster site. Residue cysteine 519 coordinates siroheme.

The protein belongs to the nitrite and sulfite reductase 4Fe-4S domain family. In terms of assembly, alpha(8)-beta(8). The alpha component is a flavoprotein, the beta component is a hemoprotein. Siroheme is required as a cofactor. The cofactor is [4Fe-4S] cluster.

The enzyme catalyses hydrogen sulfide + 3 NADP(+) + 3 H2O = sulfite + 3 NADPH + 4 H(+). It participates in sulfur metabolism; hydrogen sulfide biosynthesis; hydrogen sulfide from sulfite (NADPH route): step 1/1. In terms of biological role, component of the sulfite reductase complex that catalyzes the 6-electron reduction of sulfite to sulfide. This is one of several activities required for the biosynthesis of L-cysteine from sulfate. The sequence is that of Sulfite reductase [NADPH] hemoprotein beta-component from Methylobacterium radiotolerans (strain ATCC 27329 / DSM 1819 / JCM 2831 / NBRC 15690 / NCIMB 10815 / 0-1).